The sequence spans 702 residues: Ribosomal RNA large subunit methyltransferase K/L (702 aa).

Residues L43–L154 form the THUMP domain.

It belongs to the methyltransferase superfamily. RlmKL family.

It is found in the cytoplasm. It carries out the reaction guanosine(2445) in 23S rRNA + S-adenosyl-L-methionine = N(2)-methylguanosine(2445) in 23S rRNA + S-adenosyl-L-homocysteine + H(+). It catalyses the reaction guanosine(2069) in 23S rRNA + S-adenosyl-L-methionine = N(2)-methylguanosine(2069) in 23S rRNA + S-adenosyl-L-homocysteine + H(+). Specifically methylates the guanine in position 2445 (m2G2445) and the guanine in position 2069 (m7G2069) of 23S rRNA. In Salmonella paratyphi B (strain ATCC BAA-1250 / SPB7), this protein is Ribosomal RNA large subunit methyltransferase K/L.